Reading from the N-terminus, the 77-residue chain is Putative defensin-like protein 187 (77 aa).

A signal peptide spans 1 to 19 (MKNSSIMFVLIVVFLISSS). Disulfide bonds link Cys-31–Cys-77, Cys-43–Cys-71, and Cys-47–Cys-73.

Belongs to the DEFL family.

It is found in the secreted. This is Putative defensin-like protein 187 (LCR42) from Arabidopsis thaliana (Mouse-ear cress).